A 716-amino-acid chain; its full sequence is Leucine-rich repeat neuronal protein 1 (716 aa).

The first 25 residues, 1–25, serve as a signal peptide directing secretion; the sequence is MARLSTGKAACQVVLGLLITSLTES. In terms of domain architecture, LRRNT spans 26 to 72; it reads SILTSECPQLCVCEIRPWFTPQSTYREATTVDCNDLRLTRIPGNLSS. The Extracellular portion of the chain corresponds to 26–631; the sequence is SILTSECPQL…DISDHETSTA (606 aa). The N-linked (GlcNAc...) asparagine glycan is linked to asparagine 69. 9 LRR repeats span residues 73–95, 96–117, 120–141, 144–165, 168–189, 192–213, 216–237, 240–261, and 264–285; these read DTQV…QQLF, NLTE…GLAN, QLTT…CLQD, NLQE…AFSG, NLLR…WFDS, NLEI…NFRP, NLRS…ALVG, SLES…ALQK, and NLKF…DFKN. N-linked (GlcNAc...) asparagine glycosylation is found at asparagine 96 and asparagine 117. One can recognise an LRRCT domain in the interval 371–424; it reads NPLRCDCVIHWINSNKTNIRFMEPLSMFCAMPPEYRGQQVKEVLIQDSSEQCLP. Asparagine 385 is a glycosylation site (N-linked (GlcNAc...) asparagine). One can recognise an Ig-like C2-type domain in the interval 424–515; the sequence is PMISHDTFPN…GADTRVATIK (92 aa). Cysteine 447 and cysteine 499 are oxidised to a cystine. N-linked (GlcNAc...) asparagine glycosylation occurs at asparagine 517. The Fibronectin type-III domain occupies 525 to 619; it reads QVLKIYVKQT…VNVTTKTAAF (95 aa). Residues 632–652 form a helical membrane-spanning segment; sequence LAAVMGSMFAVISLASIAIYI. At 653–716 the chain is on the cytoplasmic side; it reads AKRFKRKNYH…VDTSRSYYMW (64 aa). The tract at residues 692–716 is disordered; the sequence is SDKDKDGSADTKPTQVDTSRSYYMW. A compositionally biased stretch (polar residues) spans 702-716; that stretch reads TKPTQVDTSRSYYMW.

As to expression, expressed in brain.

It localises to the membrane. The polypeptide is Leucine-rich repeat neuronal protein 1 (Lrrn1) (Mus musculus (Mouse)).